The following is a 550-amino-acid chain: MAFNDLLQQVGGVGRFQQIQVTLVVLPLLLMASHNTVQNFTAAIPTHHCRPPANANLSKDGGLEAWLPRDRQGQPESCLRFTSPQWGPPFPNGTEANGTGATEPCTDGWIYDNSTFPSTIVTEWDLVCSHRALRQLAQSLYMVGVLLGAMVFGYLADRLGRRKVLILNYLQTAVSGTCAAFAPNFPIYCAFRLLSGMSLAGIALNCMTLNVEWMPIHTRACVGTLIGYVYSLGQFLLAGVAYAVPHWRHLQLLISVPFFAFFIYSWFFIESARWHSSSGRLDLTLRALQRVARINGKREEGAKLSMEVLRASLQKELTMGKGQASAMELLRCPTLRHLFLCLSMLWFATSFAYYGLVMDLQGFGVSIYLIQVIFGAVDLPAKLVGFLVINSLGRRPAQMAALLLAGICILLNGVVPQDQSVIRTSLAVLGKGCLAASFNCIFLYTGELYPTMIRQTGLGMGSTMARVGSIVSPLVSMTTELYPSVPLFIYGAVPVAASAVTVLLPETLGQPLPDTVQDLESRKGKQTPQQQEHQKYMVPLQASAQEKNGL.

Residues 1 to 9 (MAFNDLLQQ) lie on the Cytoplasmic side of the membrane. The chain crosses the membrane as a helical span at residues 10 to 30 (VGGVGRFQQIQVTLVVLPLLL). The Extracellular portion of the chain corresponds to 31 to 135 (MASHNTVQNF…LVCSHRALRQ (105 aa)). N-linked (GlcNAc...) asparagine glycans are attached at residues asparagine 56, asparagine 92, and asparagine 113. Residues 136 to 156 (LAQSLYMVGVLLGAMVFGYLA) traverse the membrane as a helical segment. Residues 157-164 (DRLGRRKV) are Cytoplasmic-facing. The helical transmembrane segment at 165–187 (LILNYLQTAVSGTCAAFAPNFPI) threads the bilayer. Topologically, residues 188 to 190 (YCA) are extracellular. A helical membrane pass occupies residues 191–213 (FRLLSGMSLAGIALNCMTLNVEW). Over 214-224 (MPIHTRACVGT) the chain is Cytoplasmic. The chain crosses the membrane as a helical span at residues 225–245 (LIGYVYSLGQFLLAGVAYAVP). Residues 246–248 (HWR) are Extracellular-facing. A helical transmembrane segment spans residues 249-269 (HLQLLISVPFFAFFIYSWFFI). The Cytoplasmic portion of the chain corresponds to 270 to 337 (ESARWHSSSG…ELLRCPTLRH (68 aa)). A helical transmembrane segment spans residues 338–358 (LFLCLSMLWFATSFAYYGLVM). Residues 359–368 (DLQGFGVSIY) lie on the Extracellular side of the membrane. A helical transmembrane segment spans residues 369–389 (LIQVIFGAVDLPAKLVGFLVI). The Cytoplasmic segment spans residues 390-395 (NSLGRR). Residues 396-416 (PAQMAALLLAGICILLNGVVP) form a helical membrane-spanning segment. Over 417 to 425 (QDQSVIRTS) the chain is Extracellular. Residues 426-446 (LAVLGKGCLAASFNCIFLYTG) form a helical membrane-spanning segment. Residues 447 to 456 (ELYPTMIRQT) are Cytoplasmic-facing. The chain crosses the membrane as a helical span at residues 457 to 477 (GLGMGSTMARVGSIVSPLVSM). The Extracellular portion of the chain corresponds to 478 to 484 (TTELYPS). A helical membrane pass occupies residues 485–505 (VPLFIYGAVPVAASAVTVLLP). Residues 506 to 550 (ETLGQPLPDTVQDLESRKGKQTPQQQEHQKYMVPLQASAQEKNGL) are Cytoplasmic-facing. Residues 513–550 (PDTVQDLESRKGKQTPQQQEHQKYMVPLQASAQEKNGL) are disordered.

The protein belongs to the major facilitator (TC 2.A.1) superfamily. Organic cation transporter (TC 2.A.1.19) family. Glycosylated. Glycosylation is necessary for proper targeting of the transporter to the plasma membrane. In terms of tissue distribution, expressed in kidney; in the basolateral membrane of the proximal tubule.

It is found in the basolateral cell membrane. It localises to the basal cell membrane. The catalysed reaction is (6R)-L-erythro-5,6,7,8-tetrahydrobiopterin(out) + a dicarboxylate(in) = (6R)-L-erythro-5,6,7,8-tetrahydrobiopterin(in) + a dicarboxylate(out). It catalyses the reaction L-erythro-7,8-dihydrobiopterin(out) + a dicarboxylate(in) = L-erythro-7,8-dihydrobiopterin(in) + a dicarboxylate(out). The enzyme catalyses L-sepiapterin(out) + a dicarboxylate(in) = L-sepiapterin(in) + a dicarboxylate(out). It carries out the reaction prostaglandin F2alpha(out) + a dicarboxylate(in) = prostaglandin F2alpha(in) + a dicarboxylate(out). The catalysed reaction is prostaglandin E2(out) + a dicarboxylate(in) = prostaglandin E2(in) + a dicarboxylate(out). It catalyses the reaction 3',5'-cyclic AMP(out) + a dicarboxylate(in) = 3',5'-cyclic AMP(in) + a dicarboxylate(out). The enzyme catalyses 3',5'-cyclic GMP(out) + a dicarboxylate(in) = 3',5'-cyclic GMP(in) + a dicarboxylate(out). It carries out the reaction urate(out) + a dicarboxylate(in) = urate(in) + a dicarboxylate(out). The catalysed reaction is kynurenate(out) + glutarate(in) = kynurenate(in) + glutarate(out). It catalyses the reaction (indol-3-yl)acetate(out) + a dicarboxylate(in) = (indol-3-yl)acetate(in) + a dicarboxylate(out). The enzyme catalyses indoxyl sulfate(out) + a dicarboxylate(in) = indoxyl sulfate(in) + a dicarboxylate(out). It carries out the reaction N-benzoylglycine(out) + a dicarboxylate(in) = N-benzoylglycine(in) + a dicarboxylate(out). The catalysed reaction is 3-carboxy-4-methyl-5-propyl-2-furanpropanoate(out) + a dicarboxylate(in) = 3-carboxy-4-methyl-5-propyl-2-furanpropanoate(in) + a dicarboxylate(out). In terms of biological role, secondary active transporter that functions as a Na(+)-independent organic anion (OA)/dicarboxylate antiporter where the uptake of one molecule of OA into the cell is coupled with an efflux of one molecule of intracellular dicarboxylate such as 2-oxoglutarate or glutarate. Mediates the uptake of OA across the basolateral side of proximal tubule epithelial cells, thereby contributing to the renal elimination of endogenous OA from the systemic circulation into the urine. Functions as a biopterin transporters involved in the uptake and the secretion of coenzymes tetrahydrobiopterin (BH4), dihydrobiopterin (BH2) and sepiapterin to urine, thereby determining baseline levels of blood biopterins. Transports prostaglandin E2 (PGE2) and prostaglandin F2-alpha (PGF2-alpha) and may contribute to their renal excretion. Also mediates the uptake of cyclic nucleotides such as cAMP and cGMP. Involved in the transport of neuroactive tryptophan metabolites kynurenate (KYNA) and xanthurenate (XA) and may contribute to their secretion from the brain. May transport glutamate. Also involved in the disposition of uremic toxins and potentially toxic xenobiotics by the renal organic anion secretory pathway, helping reduce their undesired toxicological effects on the body. Uremic toxins include the indoxyl sulfate (IS), hippurate/N-benzoylglycine (HA), indole acetate (IA), 3-carboxy-4- methyl-5-propyl-2-furanpropionate (CMPF) and urate. Xenobiotics include the mycotoxin ochratoxin (OTA). May also contribute to the transport of organic compounds in testes across the blood-testis-barrier. The sequence is that of Solute carrier family 22 member 6 from Macaca fascicularis (Crab-eating macaque).